We begin with the raw amino-acid sequence, 240 residues long: uncharacterized protein (240 aa).

A run of 2 helical transmembrane segments spans residues alanine 16–proline 36 and phenylalanine 67–methionine 87.

It is found in the cell membrane. This is an uncharacterized protein from Bacillus subtilis (strain 168).